Consider the following 364-residue polypeptide: tRNA 2-selenouridine synthase (364 aa).

The Rhodanese domain maps to 14-137 (LIADTPIIDV…LRQTAIQATI (124 aa)). Cysteine 97 (S-selanylcysteine intermediate) is an active-site residue.

The protein belongs to the SelU family. Monomer.

The enzyme catalyses 5-methylaminomethyl-2-thiouridine(34) in tRNA + selenophosphate + (2E)-geranyl diphosphate + H2O + H(+) = 5-methylaminomethyl-2-selenouridine(34) in tRNA + (2E)-thiogeraniol + phosphate + diphosphate. It carries out the reaction 5-methylaminomethyl-2-thiouridine(34) in tRNA + (2E)-geranyl diphosphate = 5-methylaminomethyl-S-(2E)-geranyl-thiouridine(34) in tRNA + diphosphate. The catalysed reaction is 5-methylaminomethyl-S-(2E)-geranyl-thiouridine(34) in tRNA + selenophosphate + H(+) = 5-methylaminomethyl-2-(Se-phospho)selenouridine(34) in tRNA + (2E)-thiogeraniol. It catalyses the reaction 5-methylaminomethyl-2-(Se-phospho)selenouridine(34) in tRNA + H2O = 5-methylaminomethyl-2-selenouridine(34) in tRNA + phosphate. Its function is as follows. Involved in the post-transcriptional modification of the uridine at the wobble position (U34) of tRNA(Lys), tRNA(Glu) and tRNA(Gln). Catalyzes the conversion of 2-thiouridine (S2U-RNA) to 2-selenouridine (Se2U-RNA). Acts in a two-step process involving geranylation of 2-thiouridine (S2U) to S-geranyl-2-thiouridine (geS2U) and subsequent selenation of the latter derivative to 2-selenouridine (Se2U) in the tRNA chain. The sequence is that of tRNA 2-selenouridine synthase from Escherichia coli (strain SMS-3-5 / SECEC).